The primary structure comprises 156 residues: Small ribosomal subunit protein uS7 (156 aa).

It belongs to the universal ribosomal protein uS7 family. Part of the 30S ribosomal subunit. Contacts proteins S9 and S11.

Functionally, one of the primary rRNA binding proteins, it binds directly to 16S rRNA where it nucleates assembly of the head domain of the 30S subunit. Is located at the subunit interface close to the decoding center, probably blocks exit of the E-site tRNA. The polypeptide is Small ribosomal subunit protein uS7 (Xanthobacter autotrophicus (strain ATCC BAA-1158 / Py2)).